A 337-amino-acid polypeptide reads, in one-letter code: Nucleotide sugar transporter SLC35D2 (337 aa).

Over Met-1–Arg-27 the chain is Cytoplasmic. Residues Leu-28–Leu-48 form a helical membrane-spanning segment. At Leu-49–Gly-53 the chain is on the extracellular side. Residues Phe-54–Val-74 form a helical membrane-spanning segment. The Cytoplasmic segment spans residues Ser-75–Asn-146. The next 2 helical transmembrane spans lie at Ile-147 to Ala-167 and Phe-168 to Val-188. The Cytoplasmic portion of the chain corresponds to Tyr-189 to Lys-201. Residues Tyr-202–Ser-222 traverse the membrane as a helical segment. At Thr-223–Asn-237 the chain is on the extracellular side. The helical transmembrane segment at Val-238–Thr-258 threads the bilayer. The Cytoplasmic portion of the chain corresponds to Val-259 to Asn-265. Residues Ser-266 to Ile-288 form a helical membrane-spanning segment. The Extracellular segment spans residues Gly-289–Tyr-292. The chain crosses the membrane as a helical span at residues Ile-293–Leu-315. Residues Thr-316–Ser-337 are Cytoplasmic-facing.

Belongs to the TPT transporter family. SLC35D subfamily. Highly expressed in heart, kidney, small intestine, placenta, lung and peripheral blood leukocyte. Weakly expressed in skeletal muscle and spleen. Not expressed in brain, colon and thymus.

The protein resides in the golgi apparatus membrane. It carries out the reaction UMP(out) + UDP-N-acetyl-alpha-D-glucosamine(in) = UMP(in) + UDP-N-acetyl-alpha-D-glucosamine(out). The enzyme catalyses UMP(out) + UDP-alpha-D-glucose(in) = UMP(in) + UDP-alpha-D-glucose(out). In terms of biological role, nucleotide sugar antiporter transporting UDP-N-acetylglucosamine (UDP-GlcNAc) and UDP-glucose (UDP-Glc) from the cytosol into the lumen of the Golgi in exchange of UMP. By supplying UDP-N-acetylglucosamine, a donor substrate to heparan sulfate synthases, probably takes part in the synthesis of these glycoconjugates. The protein is Nucleotide sugar transporter SLC35D2 of Homo sapiens (Human).